The chain runs to 87 residues: Putative phytosulfokines 4 (87 aa).

Residues 1–23 (MANLSTLITIALLLCATMLTCSA) form the signal peptide. The propeptide occupies 24–77 (RPEPAYFASFTTSPADTLSLEMIESKLHEVAGESCDKEDDEDCLVRRTLTAHLD). A sulfotyrosine mark is found at Tyr-78 and Tyr-80. Positions 83–87 (KNNHH) are excised as a propeptide.

The protein belongs to the phytosulfokine family. Sulfation is important for activity and for the binding to a putative membrane receptor.

The protein localises to the secreted. Its function is as follows. Promotes plant cell differentiation, organogenesis and somatic embryogenesis as well as cell proliferation. This Arabidopsis thaliana (Mouse-ear cress) protein is Putative phytosulfokines 4 (PSK4).